We begin with the raw amino-acid sequence, 1104 residues long: Receptor-mediated endocytosis protein 6 (1104 aa).

The region spanning 156 to 389 (LKIAQVVCYL…EMMDSLLVEN (234 aa)) is the Ras-GAP domain. The interval 663–682 (SSLAKQPSGMVSSASAQNIP) is disordered. One can recognise a VPS9 domain in the interval 966-1104 (QKKDKLLQSV…SAVEYIKTIL (139 aa)).

It belongs to the GAPVD1 family. As to quaternary structure, interacts with GDP-bound rab-5. Interacts with alpha-adaptin.

The protein localises to the membrane. It is found in the cytoplasmic vesicle. Its subcellular location is the clathrin-coated vesicle. Its function is as follows. Acts both as a GTPase-activating protein (GAP) and a guanine nucleotide exchange factor (GEF), and participates in endocytosis. Acts by regulating the activation of rab-5 by exchanging bound GDP for free GTP at clathrin coated pits. In Caenorhabditis briggsae, this protein is Receptor-mediated endocytosis protein 6 (rme-6).